A 296-amino-acid polypeptide reads, in one-letter code: Malate--CoA ligase subunit alpha (296 aa).

Residues 17–20 (TGDK), lysine 43, and 96–98 (ITD) each bind CoA. Histidine 251 functions as the Tele-phosphohistidine intermediate in the catalytic mechanism.

This sequence belongs to the succinate/malate CoA ligase alpha subunit family. As to quaternary structure, heterotetramer of two alpha and two beta subunits.

The enzyme catalyses (S)-malate + ATP + CoA = (S)-malyl-CoA + ADP + phosphate. It participates in one-carbon metabolism; formaldehyde assimilation via serine pathway. The polypeptide is Malate--CoA ligase subunit alpha (mtkB) (Methylorubrum extorquens (strain ATCC 14718 / DSM 1338 / JCM 2805 / NCIMB 9133 / AM1) (Methylobacterium extorquens)).